Here is a 262-residue protein sequence, read N- to C-terminus: Zinc import ATP-binding protein ZnuC (262 aa).

Positions 6–221 (IRLDKVAVTL…PAFVELFGKN (216 aa)) constitute an ABC transporter domain. 38–45 (GPNGAGKT) contributes to the ATP binding site.

The protein belongs to the ABC transporter superfamily. Zinc importer (TC 3.A.1.15.5) family. In terms of assembly, the complex is composed of two ATP-binding proteins (ZnuC), two transmembrane proteins (ZnuB) and a solute-binding protein (ZnuA).

It localises to the cell inner membrane. The catalysed reaction is Zn(2+)(out) + ATP(in) + H2O(in) = Zn(2+)(in) + ADP(in) + phosphate(in) + H(+)(in). Its function is as follows. Part of the ABC transporter complex ZnuABC involved in zinc import. Responsible for energy coupling to the transport system. This chain is Zinc import ATP-binding protein ZnuC, found in Pseudomonas syringae pv. syringae (strain B728a).